The primary structure comprises 507 residues: ATP synthase subunit alpha, chloroplastic (507 aa).

An ATP-binding site is contributed by Ile-170–Lys-177.

Belongs to the ATPase alpha/beta chains family. F-type ATPases have 2 components, CF(1) - the catalytic core - and CF(0) - the membrane proton channel. CF(1) has five subunits: alpha(3), beta(3), gamma(1), delta(1), epsilon(1). CF(0) has four main subunits: a, b, b' and c.

Its subcellular location is the plastid. The protein localises to the chloroplast thylakoid membrane. It carries out the reaction ATP + H2O + 4 H(+)(in) = ADP + phosphate + 5 H(+)(out). In terms of biological role, produces ATP from ADP in the presence of a proton gradient across the membrane. The alpha chain is a regulatory subunit. The chain is ATP synthase subunit alpha, chloroplastic from Adiantum capillus-veneris (Maidenhair fern).